Reading from the N-terminus, the 348-residue chain is Cylicin-2 (348 aa).

The interval 25–347 is 31 X 3 AA repeats of K-K-X; sequence KKSWNQQHFA…DEKKDAKKKG (323 aa). Disordered stretches follow at residues 35–59 and 101–348; these read LLFP…DNTV and PTRT…KKGK. Composition is skewed to basic and acidic residues over residues 103-159, 166-217, 238-267, and 276-342; these read RTVE…DAKK, KDAE…EKDS, KADE…AKEI, and KPSS…EKKD. 3 consecutive repeat copies span residues 157–184, 185–212, and 213–240. A 3 X approximate tandem repeats region spans residues 157–240; the sequence is AKKDSKKGKK…AIELQAVKAD (84 aa).

In terms of tissue distribution, testis.

The protein localises to the cytoplasm. Its subcellular location is the cytoskeleton. The protein resides in the perinuclear theca. It is found in the calyx. Functionally, plays a role in the establishment of normal sperm morphology during spermatogenesis. It is required for acrosome attachment to the nuclear envelope, and proper manchette elongation and disassembly. In Homo sapiens (Human), this protein is Cylicin-2 (CYLC2).